A 132-amino-acid polypeptide reads, in one-letter code: L-ectoine synthase (132 aa).

Belongs to the ectoine synthase family.

The enzyme catalyses (2S)-4-acetamido-2-aminobutanoate = L-ectoine + H2O. It participates in amine and polyamine biosynthesis; ectoine biosynthesis; L-ectoine from L-aspartate 4-semialdehyde: step 3/3. Functionally, catalyzes the circularization of gamma-N-acetyl-alpha,gamma-diaminobutyric acid (ADABA) to ectoine (1,4,5,6-tetrahydro-2-methyl-4-pyrimidine carboxylic acid), which is an excellent osmoprotectant. In Rhodococcus erythropolis (strain PR4 / NBRC 100887), this protein is L-ectoine synthase.